The following is an 829-amino-acid chain: Probable beta-glucosidase H (829 aa).

An N-linked (GlcNAc...) asparagine glycan is attached at asparagine 13. Residue aspartate 225 is part of the active site. Asparagine 304, asparagine 473, asparagine 602, asparagine 627, and asparagine 664 each carry an N-linked (GlcNAc...) asparagine glycan. One can recognise a PA14 domain in the interval 389-548 (RMLSNAVIHF…DPEQMVANAV (160 aa)).

The protein belongs to the glycosyl hydrolase 3 family.

Its subcellular location is the secreted. It carries out the reaction Hydrolysis of terminal, non-reducing beta-D-glucosyl residues with release of beta-D-glucose.. It functions in the pathway glycan metabolism; cellulose degradation. Its function is as follows. Beta-glucosidases are one of a number of cellulolytic enzymes involved in the degradation of cellulosic biomass. Catalyzes the last step releasing glucose from the inhibitory cellobiose. This chain is Probable beta-glucosidase H (bglH), found in Neosartorya fischeri (strain ATCC 1020 / DSM 3700 / CBS 544.65 / FGSC A1164 / JCM 1740 / NRRL 181 / WB 181) (Aspergillus fischerianus).